Here is a 388-residue protein sequence, read N- to C-terminus: MLTYLTAGESHGPQGTAIIEGIPAGLAIDVDQINADLASRQGGYGRGSRQQIEHDQVEILGGVRHGLTLGSPITLVVKNRDHAHWSSIMHPTSPATAENTLRKVERPRPGHADLVGGMKYRHRDLRNVLERSSARETAIRVAVGNVCKQLLAALGVTLVGYVQAIGPVDTDLTKPQTVSEIKDAITQNNLRILAQDRVAELHDLIDQTRRAGDTLGGWIRVVVNGMPAGIGSYVSWDTKLDGQLAAAVMGVNAMKGVSIGDGFEISRHPGSQGMDEISHDADGYHRLSNHLGGLEGGMTNGMPLIINAAMKPIPTLYKALKTVNVVTKEVEKASVERSDTTAIVPASIVIENVVAIELAKALTNSFNADNLARLQEQLAAYREELRGY.

Residues Arg40 and Arg46 each contribute to the NADP(+) site. FMN contacts are provided by residues 131–133 (RSS), 252–253 (NA), Gly296, 311–315 (KPIPT), and Arg337.

Belongs to the chorismate synthase family. Homotetramer. It depends on FMNH2 as a cofactor.

It catalyses the reaction 5-O-(1-carboxyvinyl)-3-phosphoshikimate = chorismate + phosphate. The protein operates within metabolic intermediate biosynthesis; chorismate biosynthesis; chorismate from D-erythrose 4-phosphate and phosphoenolpyruvate: step 7/7. Functionally, catalyzes the anti-1,4-elimination of the C-3 phosphate and the C-6 proR hydrogen from 5-enolpyruvylshikimate-3-phosphate (EPSP) to yield chorismate, which is the branch point compound that serves as the starting substrate for the three terminal pathways of aromatic amino acid biosynthesis. This reaction introduces a second double bond into the aromatic ring system. This chain is Chorismate synthase, found in Limosilactobacillus fermentum (strain NBRC 3956 / LMG 18251) (Lactobacillus fermentum).